Consider the following 276-residue polypeptide: Cruxhalorhodopsin-3 (276 aa).

Residues 1–21 (MPAASTAATTLLQASQSEVLG) constitute a propeptide that is removed on maturation. Topologically, residues 22 to 25 (EIQS) are extracellular. A helical membrane pass occupies residues 26-51 (NFLLNSSLWVNIALAGVVILLFVAMG). At 52–57 (RELESS) the chain is on the cytoplasmic side. The chain crosses the membrane as a helical span at residues 58–81 (RAKLIWVATMLVPLVSISSYAGLA). The Extracellular portion of the chain corresponds to 82-105 (SGLTVGFLQMPPGHALAGQEVLSP). Residues 106–127 (WGRYLTWTFSTPMILLALGLLA) traverse the membrane as a helical segment. Over 128–130 (DTD) the chain is Cytoplasmic. Residues 131-154 (MASLFTAITMDIGMCITGLAAALV) form a helical membrane-spanning segment. Residues 155–157 (TSS) lie on the Extracellular side of the membrane. Residues 158-180 (HLLRWVFYGISCAFFIAVLYVLL) form a helical membrane-spanning segment. Residues 181 to 192 (VEWPADAEAAGT) are Cytoplasmic-facing. Residues 193-216 (SEIFGTLKLLTVVLWLGYPILWAL) form a helical membrane-spanning segment. At 217–225 (GSEGVALLS) the chain is on the extracellular side. Residues 226 to 254 (VGVTSWGYSGLDILAKYVFAFLLLRWVAA) traverse the membrane as a helical segment. N6-(retinylidene)lysine is present on K241. The Cytoplasmic portion of the chain corresponds to 255–276 (NEDTVTQAGMSLGSGGAAPADD).

Belongs to the archaeal/bacterial/fungal opsin family.

The protein resides in the cell membrane. In terms of biological role, light-driven chloride pump. This is Cruxhalorhodopsin-3 (choP3) from Haloarcula vallismortis (Halobacterium vallismortis).